Here is a 201-residue protein sequence, read N- to C-terminus: Recombination protein RecR (201 aa).

Residues 60-75 (CSRCGNVDTVDPCIVC) form a C4-type zinc finger. Positions 83 to 178 (SVIIVVEDVS…KITRLAHGVP (96 aa)) constitute a Toprim domain.

Belongs to the RecR family.

Its function is as follows. May play a role in DNA repair. It seems to be involved in an RecBC-independent recombinational process of DNA repair. It may act with RecF and RecO. The chain is Recombination protein RecR from Rhizobium johnstonii (strain DSM 114642 / LMG 32736 / 3841) (Rhizobium leguminosarum bv. viciae).